Here is a 94-residue protein sequence, read N- to C-terminus: Co-chaperonin GroES (94 aa).

Belongs to the GroES chaperonin family. Heptamer of 7 subunits arranged in a ring. Interacts with the chaperonin GroEL.

It is found in the cytoplasm. In terms of biological role, together with the chaperonin GroEL, plays an essential role in assisting protein folding. The GroEL-GroES system forms a nano-cage that allows encapsulation of the non-native substrate proteins and provides a physical environment optimized to promote and accelerate protein folding. GroES binds to the apical surface of the GroEL ring, thereby capping the opening of the GroEL channel. In Clostridium beijerinckii (strain ATCC 51743 / NCIMB 8052) (Clostridium acetobutylicum), this protein is Co-chaperonin GroES.